Consider the following 501-residue polypeptide: Protein YLS7 (501 aa).

The helical; Signal-anchor for type II membrane protein transmembrane segment at 25 to 45 (IAFAIGGLTSFVIFASLLLFT) threads the bilayer. The segment at 69 to 131 (HSIHDPDRNP…NVSIDEEATQ (63 aa)) is disordered. Residues 78–89 (PSPVSSSESPPV) show a composition bias toward low complexity. Residues 94 to 113 (SDDKVLPKGSHDSNDVRLGE) show a composition bias toward basic and acidic residues. A compositionally biased stretch (polar residues) spans 114 to 124 (ETNSGKSSNVS). The short motif at 211–213 (GDS) is the GDS motif element. The interval 438-467 (RHDGHPGPYRSPDPKKITKRGPDGQPPPQD) is disordered. Positions 449–459 (PDPKKITKRGP) are enriched in basic and acidic residues. Residues 467 to 481 (DCLHWCMPGPVDTWN) carry the DCXHWCLPGXXDXWN motif motif.

The protein belongs to the PC-esterase family. TBL subfamily. In terms of tissue distribution, expressed in roots, cauline leaves and flowers.

It is found in the membrane. Its function is as follows. May act as a bridging protein that binds pectin and other cell wall polysaccharides. Probably involved in maintaining esterification of pectins. May be involved in the specific O-acetylation of cell wall polymers. In Arabidopsis thaliana (Mouse-ear cress), this protein is Protein YLS7 (YLS7).